Reading from the N-terminus, the 49-residue chain is Osteocalcin (49 aa).

One can recognise a Gla domain in the interval 1-47; the sequence is YLDHGLGAPAPYPDPLEPKREVCELNPDCDELADHIGFQEAYRRFYG. P9 bears the Hydroxyproline mark. 4 residues coordinate Ca(2+): E17, E21, E24, and D30. Residues E17, E21, and E24 each carry the 4-carboxyglutamate modification. A disulfide bond links C23 and C29.

Belongs to the osteocalcin/matrix Gla protein family. Gamma-carboxyglutamic acid residues are formed by vitamin K dependent carboxylation. These residues are essential for the binding of calcium.

It localises to the secreted. In terms of biological role, the carboxylated form is one of the main organic components of the bone matrix, which constitutes 1-2% of the total bone protein: it acts as a negative regulator of bone formation and is required to limit bone formation without impairing bone resorption or mineralization. The carboxylated form binds strongly to apatite and calcium. Functionally, the uncarboxylated form acts as a hormone secreted by osteoblasts, which regulates different cellular processes, such as energy metabolism, male fertility and brain development. Regulates of energy metabolism by acting as a hormone favoring pancreatic beta-cell proliferation, insulin secretion and sensitivity and energy expenditure. Uncarboxylated osteocalcin hormone also promotes testosterone production in the testes: acts as a ligand for G protein-coupled receptor GPRC6A at the surface of Leydig cells, initiating a signaling response that promotes the expression of enzymes required for testosterone synthesis in a CREB-dependent manner. Also acts as a regulator of brain development: osteocalcin hormone crosses the blood-brain barrier and acts as a ligand for GPR158 on neurons, initiating a signaling response that prevents neuronal apoptosis in the hippocampus, favors the synthesis of all monoamine neurotransmitters and inhibits that of gamma-aminobutyric acid (GABA). Osteocalcin also crosses the placenta during pregnancy and maternal osteocalcin is required for fetal brain development. The chain is Osteocalcin (BGLAP) from Bison priscus (Steppe wisent).